The primary structure comprises 412 residues: CHRNA7-FAM7A fusion protein (412 aa).

The next 5 membrane-spanning stretches (helical) occupy residues 144 to 164 (GLNLLIPCVLISALALLVFLL), 172 to 192 (ISLGITVLLSLTVFMLLVAEI), 205 to 225 (QYFASTMIIVGLSVVVTVIVL), 240 to 254 (WTRVILLNWCAWFLR), and 380 to 400 (LCLMAFSVFTIICTIGILMSA).

This sequence belongs to the ligand-gated ion channel (TC 1.A.9) family. Expressed in hippocampus.

It localises to the membrane. This Homo sapiens (Human) protein is CHRNA7-FAM7A fusion protein (CHRFAM7A).